A 682-amino-acid chain; its full sequence is Potassium-transporting ATPase ATP-binding subunit (682 aa).

Helical transmembrane passes span 34–54, 62–82, 219–239, and 254–274; these read PVMF…IAMA, ALFS…ANFA, IALT…TATL, and VLVA…LSAI. D307 (4-aspartylphosphate intermediate) is an active-site residue. ATP-binding positions include D344, E348, 377 to 384, and K395; that span reads FTAQSRMS. The Mg(2+) site is built by D518 and D522. The next 3 helical transmembrane spans lie at 588 to 608, 616 to 636, and 656 to 676; these read FAII…LNIM, AILS…PLAL, and IYGL…DLLL.

The protein belongs to the cation transport ATPase (P-type) (TC 3.A.3) family. Type IA subfamily. The system is composed of three essential subunits: KdpA, KdpB and KdpC.

The protein localises to the cell inner membrane. The enzyme catalyses K(+)(out) + ATP + H2O = K(+)(in) + ADP + phosphate + H(+). In terms of biological role, part of the high-affinity ATP-driven potassium transport (or Kdp) system, which catalyzes the hydrolysis of ATP coupled with the electrogenic transport of potassium into the cytoplasm. This subunit is responsible for energy coupling to the transport system and for the release of the potassium ions to the cytoplasm. The chain is Potassium-transporting ATPase ATP-binding subunit from Escherichia fergusonii (strain ATCC 35469 / DSM 13698 / CCUG 18766 / IAM 14443 / JCM 21226 / LMG 7866 / NBRC 102419 / NCTC 12128 / CDC 0568-73).